Here is a 389-residue protein sequence, read N- to C-terminus: PqqA peptide cyclase (389 aa).

Residues 20-235 (VGLPLWLLAE…TNEYRARLEA (216 aa)) form the Radical SAM core domain. The [4Fe-4S] cluster site is built by Cys34, Cys38, and Cys41.

This sequence belongs to the radical SAM superfamily. PqqE family. In terms of assembly, interacts with PqqD. The interaction is necessary for activity of PqqE. Requires [4Fe-4S] cluster as cofactor.

The catalysed reaction is [PQQ precursor protein] + S-adenosyl-L-methionine = E-Y cross-linked-[PQQ precursor protein] + 5'-deoxyadenosine + L-methionine + H(+). The protein operates within cofactor biosynthesis; pyrroloquinoline quinone biosynthesis. Its function is as follows. Catalyzes the cross-linking of a glutamate residue and a tyrosine residue in the PqqA protein as part of the biosynthesis of pyrroloquinoline quinone (PQQ). The sequence is that of PqqA peptide cyclase from Pseudomonas fluorescens (strain ATCC BAA-477 / NRRL B-23932 / Pf-5).